Reading from the N-terminus, the 68-residue chain is U4-agatoxin-Ao1a (68 aa).

The first 25 residues, 1 to 25 (MKKSTVIVLSLAAFVLLSVMQFSAA), serve as a signal peptide directing secretion. Positions 26-36 (EDIKMEVEEQR) are excised as a propeptide. 4 disulfide bridges follow: C39–C52, C46–C57, C51–C66, and C59–C64.

Belongs to the neurotoxin 33 family. In terms of tissue distribution, expressed by the venom gland.

Its subcellular location is the secreted. The protein is U4-agatoxin-Ao1a of Agelena orientalis (Funnel-web spider).